The chain runs to 352 residues: rRNA 2'-O-methyltransferase fibrillarin (352 aa).

A disordered region spans residues 1-115 (MGRPEFNRGG…GGAGGMRGGK (115 aa)). Asymmetric dimethylarginine occurs at positions 8, 16, 19, 23, 27, 35, 43, 51, 55, 58, 63, 67, 70, 75, 81, 85, 91, 95, 98, 102, 105, and 112. The span at 8 to 18 (RGGGGGGFRGG) shows a compositional bias: gly residues. The span at 26–59 (SRGGFGGGGRGGYGGGDRGSFGGGDRGGFRGGRG) shows a compositional bias: gly residues. Gly residues predominate over residues 66–113 (FRGGRGGGDRGGFGGRGSPRGGFGGRGSPRGGRGSPRGGRGGAGGMRG). Residues 203–204 (TT), 222–223 (EF), 247–248 (DA), and 267–270 (DVAQ) contribute to the S-adenosyl-L-methionine site.

It belongs to the methyltransferase superfamily. Fibrillarin family. As to quaternary structure, component of box C/D small nucleolar ribonucleoprotein (snoRNP) particles. It is associated with the U3, U8 and U13 small nuclear RNAs. Post-translationally, by homology to other fibrillarins, some or all of the N-terminal domain arginines are modified to asymmetric dimethylarginine (DMA).

It is found in the nucleus. It localises to the nucleolus. Its subcellular location is the nucleoplasm. It catalyses the reaction L-glutaminyl-[histone H2A] + S-adenosyl-L-methionine = N(5)-methyl-L-glutaminyl-[histone H2A] + S-adenosyl-L-homocysteine + H(+). S-adenosyl-L-methionine-dependent methyltransferase that has the ability to methylate both RNAs and proteins. Involved in pre-rRNA processing. Utilizes the methyl donor S-adenosyl-L-methionine to catalyze the site-specific 2'-hydroxyl methylation of ribose moieties in pre-ribosomal RNA. Site specificity is provided by a guide RNA that base pairs with the substrate. Methylation occurs at a characteristic distance from the sequence involved in base pairing with the guide RNA. Also acts as a protein methyltransferase by mediating methylation of 'Gln-105' of histone H2A (H2AQ105me), a modification that impairs binding of the FACT complex and is specifically present at 35S ribosomal DNA locus. Plays a role in modulation of nucleolus size most likely through regulating the ribosomal RNA (rRNA) pool. The sequence is that of rRNA 2'-O-methyltransferase fibrillarin from Caenorhabditis elegans.